The chain runs to 334 residues: Holliday junction branch migration complex subunit RuvB (334 aa).

The tract at residues 4–184 (ADRLISAAVI…FGIVQRLEFY (181 aa)) is large ATPase domain (RuvB-L). ATP contacts are provided by residues Ile23, Arg24, Gly65, Lys68, Thr69, Thr70, 131 to 133 (EDY), Arg174, Tyr184, and Arg221. Thr69 contributes to the Mg(2+) binding site. The interval 185-255 (QVADLEHIVS…VAMKALDMLN (71 aa)) is small ATPAse domain (RuvB-S). The head domain (RuvB-H) stretch occupies residues 258-334 (AEGFDFMDRK…YKHFGITREE (77 aa)). DNA contacts are provided by Arg294, Arg313, and Arg318.

The protein belongs to the RuvB family. In terms of assembly, homohexamer. Forms an RuvA(8)-RuvB(12)-Holliday junction (HJ) complex. HJ DNA is sandwiched between 2 RuvA tetramers; dsDNA enters through RuvA and exits via RuvB. An RuvB hexamer assembles on each DNA strand where it exits the tetramer. Each RuvB hexamer is contacted by two RuvA subunits (via domain III) on 2 adjacent RuvB subunits; this complex drives branch migration. In the full resolvosome a probable DNA-RuvA(4)-RuvB(12)-RuvC(2) complex forms which resolves the HJ.

Its subcellular location is the cytoplasm. It catalyses the reaction ATP + H2O = ADP + phosphate + H(+). Its function is as follows. The RuvA-RuvB-RuvC complex processes Holliday junction (HJ) DNA during genetic recombination and DNA repair, while the RuvA-RuvB complex plays an important role in the rescue of blocked DNA replication forks via replication fork reversal (RFR). RuvA specifically binds to HJ cruciform DNA, conferring on it an open structure. The RuvB hexamer acts as an ATP-dependent pump, pulling dsDNA into and through the RuvAB complex. RuvB forms 2 homohexamers on either side of HJ DNA bound by 1 or 2 RuvA tetramers; 4 subunits per hexamer contact DNA at a time. Coordinated motions by a converter formed by DNA-disengaged RuvB subunits stimulates ATP hydrolysis and nucleotide exchange. Immobilization of the converter enables RuvB to convert the ATP-contained energy into a lever motion, pulling 2 nucleotides of DNA out of the RuvA tetramer per ATP hydrolyzed, thus driving DNA branch migration. The RuvB motors rotate together with the DNA substrate, which together with the progressing nucleotide cycle form the mechanistic basis for DNA recombination by continuous HJ branch migration. Branch migration allows RuvC to scan DNA until it finds its consensus sequence, where it cleaves and resolves cruciform DNA. The protein is Holliday junction branch migration complex subunit RuvB of Yersinia pseudotuberculosis serotype O:1b (strain IP 31758).